A 211-amino-acid polypeptide reads, in one-letter code: Inactive ribonuclease-like protein 10 (211 aa).

The first 24 residues, 1–24 (MKLTLVQIFFMMLLLLLGLGVGLG), serve as a signal peptide directing secretion.

The protein belongs to the pancreatic ribonuclease family. In terms of processing, the N-terminus is blocked. Glycosylated.

It localises to the secreted. Its function is as follows. Secreted proximal epididymal protein required for post-testicular sperm maturation and male fertility. May be involved in sperm adhesion to the egg zona pellucida. Does not have ribonuclease activity. The chain is Inactive ribonuclease-like protein 10 (RNASE10) from Bos taurus (Bovine).